The chain runs to 598 residues: Transcription factor COE3 (598 aa).

A disordered region spans residues 1-23 (MFGIQENIPRGGTTMKEEPLGGG). An interaction with DNA region spans residues 63–66 (RKSN). Residues 151–170 (CRVLLTHEIMCSRCCDKKSC) form a C5-type zinc finger. Interaction with DNA regions lie at residues 197–204 (NCLKNAGN) and 236–239 (NNSK). Residues 264 to 347 (PCIKAISPSE…KGAPGRFVYT (84 aa)) form the IPT/TIG domain. Residues 452 to 483 (TSQANDQVGYSRNTSSVSPRGYVPSSTPQQSN) form a disordered region.

Belongs to the COE family. As to quaternary structure, forms either a homodimer or a heterodimer with a related family member.

It localises to the nucleus. Acts as a transcriptional activator. This Xenopus laevis (African clawed frog) protein is Transcription factor COE3 (coe3).